We begin with the raw amino-acid sequence, 420 residues long: Protein phosphatase methylesterase 1 (420 aa).

Low complexity-rich tracts occupy residues 18 to 28 and 42 to 51; these read PEAPLLSESSS and SSVSSTGTVI. The interval 18-51 is disordered; the sequence is PEAPLLSESSSMNHPAESSHDEDSSSVSSTGTVI. Active-site residues include serine 197, aspartate 223, and histidine 354.

It belongs to the AB hydrolase superfamily.

The enzyme catalyses [phosphatase 2A protein]-C-terminal L-leucine methyl ester + H2O = [phosphatase 2A protein]-C-terminal L-leucine + methanol + H(+). Its function is as follows. Demethylates proteins that have been reversibly carboxymethylated. Demethylates the phosphatase PP2A catalytic subunit. In Aspergillus fumigatus (strain ATCC MYA-4609 / CBS 101355 / FGSC A1100 / Af293) (Neosartorya fumigata), this protein is Protein phosphatase methylesterase 1 (ppe1).